Reading from the N-terminus, the 303-residue chain is Probable 5-dehydro-4-deoxyglucarate dehydratase (303 aa).

It belongs to the DapA family.

It carries out the reaction 5-dehydro-4-deoxy-D-glucarate + H(+) = 2,5-dioxopentanoate + CO2 + H2O. It functions in the pathway carbohydrate acid metabolism; D-glucarate degradation; 2,5-dioxopentanoate from D-glucarate: step 2/2. The polypeptide is Probable 5-dehydro-4-deoxyglucarate dehydratase (Acinetobacter baylyi (strain ATCC 33305 / BD413 / ADP1)).